The chain runs to 107 residues: Flagellar hook-basal body complex protein FliE (107 aa).

This sequence belongs to the FliE family.

The protein resides in the bacterial flagellum basal body. The chain is Flagellar hook-basal body complex protein FliE from Cupriavidus pinatubonensis (strain JMP 134 / LMG 1197) (Cupriavidus necator (strain JMP 134)).